A 156-amino-acid chain; its full sequence is MSYNCCSGNFSSRSFGGYLHYPGCNPYSTALCSPSICQLGSSLYRNCQKTCWEPTSCRKSCYRRRTSMLCSPCQTTCSRSLGFGSSSCHSQGYGSRSCYSLGSGSSGFRFLKYGGCGFPSLSYGSRFCYPNYLASRAWQSSCYRPICGSRFYQFTC.

4 consecutive repeat copies span residues 37-46 (CQLGSSLYRN), 47-56 (CQKTCWEPTS), 57-66 (CRKSCYRRRT), and 73-82 (CQTTCSRSLG). The tract at residues 37-82 (CQLGSSLYRNCQKTCWEPTSCRKSCYRRRTSMLCSPCQTTCSRSLG) is 4 X 10 AA approximate repeats.

The protein belongs to the PMG family. Interacts with hair keratins.

In the hair cortex, hair keratin intermediate filaments are embedded in an interfilamentous matrix, consisting of hair keratin-associated proteins (KRTAP), which are essential for the formation of a rigid and resistant hair shaft through their extensive disulfide bond cross-linking with abundant cysteine residues of hair keratins. The matrix proteins include the high-sulfur and high-glycine-tyrosine keratins. In Macaca fascicularis (Crab-eating macaque), this protein is Keratin-associated protein 13-4 (KRTAP13-4).